Here is a 989-residue protein sequence, read N- to C-terminus: Envelope glycoprotein gp130 (989 aa).

Residues methionine 1 to lysine 15 form an involved in virion budding region. Residues methionine 1–serine 65 are Cytoplasmic-facing. Residues lysine 14, lysine 15, lysine 34, and lysine 53 each participate in a glycyl lysine isopeptide (Lys-Gly) (interchain with G-Cter in ubiquitin) cross-link. The chain crosses the membrane as a helical; Signal-anchor for type III membrane protein span at residues threonine 66–valine 88. Topologically, residues threonine 89–proline 961 are lumenal. Residues asparagine 109, asparagine 141, asparagine 183, asparagine 309, asparagine 351, asparagine 392, asparagine 411, asparagine 424, asparagine 490, asparagine 509, asparagine 528, and asparagine 557 are each glycosylated (N-linked (GlcNAc...) asparagine; by host). A fusion peptide region spans residues asparagine 577–serine 599. 3 N-linked (GlcNAc...) asparagine; by host glycosylation sites follow: asparagine 783, asparagine 809, and asparagine 834. Residues isoleucine 962 to leucine 982 traverse the membrane as a helical segment. The Cytoplasmic portion of the chain corresponds to proline 983–asparagine 989. Residues lysine 985–lysine 987 carry the Endoplasmic reticulum retention signal motif.

In terms of assembly, the mature envelope protein consists of a trimer of SU-TM heterodimers. The N-terminus of leader peptide specifically interacts with Gag protein. This specific interaction between Gag protein and Env glycoprotein may allow particle egress. Post-translationally, envelope glycoproteins are synthesized as an inactive precursor that is processed by host furin or a furin-like protease to yield a functional hetero-oligomeric complex. In terms of processing, the transmembrane protein and the surface protein are N-glycosylated. Mono- and polyubiquitinated leader peptide are found in viral particles. Ubiquitination may be involved in regulating the balance between viral and subviral particles release.

It is found in the host endoplasmic reticulum membrane. The protein resides in the virion membrane. Its function is as follows. The surface protein (SU) attaches the virus to the host cell by binding to the cell receptor. This interaction triggers the refolding of transmembrane protein (TM) and is thought to activate its fusogenic potential by unmasking its fusion peptide. The transmembrane protein (TM) acts as a class I viral fusion protein. Under the current model, the protein has at least 3 conformational states: pre-fusion native state, pre-hairpin intermediate state, and post-fusion hairpin state. During viral and target cell membrane fusion, the coiled coil regions (heptad repeats) assume a trimer-of-hairpins structure, positioning the fusion peptide in close proximity to the C-terminal region of the ectodomain. The formation of this structure appears to drive apposition and subsequent fusion of viral and target cell membranes. Membranes fusion leads to delivery of the nucleocapsid into the cytoplasm. In terms of biological role, the leader peptide is a component of released, infectious virions and is required for particle budding. This is Envelope glycoprotein gp130 (env) from Simian foamy virus type 1 (SFVmac).